The following is a 281-amino-acid chain: MSLSALETTLNTAFDARDSITAATKGEVRDAVELALDLLDKGEARVAEPQADGAWKINQWLKKAVLISFRLNDMAPIPGGPGGAQWWDKVPSKLENYSEQKFREAGFRAVPGAIVRRSAFIAKNVVLMPSFVNLGAYVDEATMIDTWSTVGSCAQIGKHVHISGGVGIGGVLEPLQAGPVIIEDNCFIGARSEVAEGVIVRKGAVLSMGVFIGASTRIIDRATGEVYIGEVPAYSVVVPGSMPGKPLPDGSPGPSLYCAVIVKRVDEKTRSKTSINELLRE.

The protein belongs to the transferase hexapeptide repeat family.

It is found in the cytoplasm. It catalyses the reaction (S)-2,3,4,5-tetrahydrodipicolinate + succinyl-CoA + H2O = (S)-2-succinylamino-6-oxoheptanedioate + CoA. Its pathway is amino-acid biosynthesis; L-lysine biosynthesis via DAP pathway; LL-2,6-diaminopimelate from (S)-tetrahydrodipicolinate (succinylase route): step 1/3. In Afipia carboxidovorans (strain ATCC 49405 / DSM 1227 / KCTC 32145 / OM5) (Oligotropha carboxidovorans), this protein is 2,3,4,5-tetrahydropyridine-2,6-dicarboxylate N-succinyltransferase.